Reading from the N-terminus, the 522-residue chain is Hydroxymethylglutaryl-CoA synthase, cytoplasmic (522 aa).

Positions 43 and 44 each coordinate (3S)-3-hydroxy-3-methylglutaryl-CoA. The Proton donor/acceptor role is filled by Glu-95. 8 residues coordinate (3S)-3-hydroxy-3-methylglutaryl-CoA: Cys-129, Asn-167, Thr-171, Ser-221, His-264, Lys-273, Asn-344, and Ser-378. Cys-129 functions as the Acyl-thioester intermediate in the catalytic mechanism. The Proton donor/acceptor role is filled by His-264.

It belongs to the thiolase-like superfamily. HMG-CoA synthase family. In terms of assembly, homodimer.

It localises to the cytoplasm. It catalyses the reaction acetoacetyl-CoA + acetyl-CoA + H2O = (3S)-3-hydroxy-3-methylglutaryl-CoA + CoA + H(+). It functions in the pathway metabolic intermediate biosynthesis; (R)-mevalonate biosynthesis; (R)-mevalonate from acetyl-CoA: step 2/3. Catalyzes the condensation of acetyl-CoA with acetoacetyl-CoA to form HMG-CoA, which is converted by HMG-CoA reductase (HMGCR) into mevalonate, a precursor for cholesterol synthesis. This is Hydroxymethylglutaryl-CoA synthase, cytoplasmic (HMGCS1) from Gallus gallus (Chicken).